Reading from the N-terminus, the 93-residue chain is Phosphoribosyl-ATP pyrophosphatase (93 aa).

It belongs to the PRA-PH family.

It is found in the cytoplasm. It catalyses the reaction 1-(5-phospho-beta-D-ribosyl)-ATP + H2O = 1-(5-phospho-beta-D-ribosyl)-5'-AMP + diphosphate + H(+). It participates in amino-acid biosynthesis; L-histidine biosynthesis; L-histidine from 5-phospho-alpha-D-ribose 1-diphosphate: step 2/9. This is Phosphoribosyl-ATP pyrophosphatase from Mycobacterium leprae (strain Br4923).